A 311-amino-acid chain; its full sequence is Ribosomal RNA small subunit methyltransferase H (311 aa).

S-adenosyl-L-methionine is bound by residues 32–34 (AGH), aspartate 52, phenylalanine 79, aspartate 100, and glutamine 107. The segment at 287-311 (TASQEELEENNRARSAKLRIAEKRK) is disordered. Residues 300 to 311 (RSAKLRIAEKRK) are compositionally biased toward basic residues.

This sequence belongs to the methyltransferase superfamily. RsmH family.

The protein localises to the cytoplasm. It carries out the reaction cytidine(1402) in 16S rRNA + S-adenosyl-L-methionine = N(4)-methylcytidine(1402) in 16S rRNA + S-adenosyl-L-homocysteine + H(+). Functionally, specifically methylates the N4 position of cytidine in position 1402 (C1402) of 16S rRNA. The sequence is that of Ribosomal RNA small subunit methyltransferase H from Bacillus subtilis (strain 168).